The following is a 211-amino-acid chain: ATP phosphoribosyltransferase (211 aa).

Belongs to the ATP phosphoribosyltransferase family. Short subfamily. Heteromultimer composed of HisG and HisZ subunits.

The protein localises to the cytoplasm. The catalysed reaction is 1-(5-phospho-beta-D-ribosyl)-ATP + diphosphate = 5-phospho-alpha-D-ribose 1-diphosphate + ATP. Its pathway is amino-acid biosynthesis; L-histidine biosynthesis; L-histidine from 5-phospho-alpha-D-ribose 1-diphosphate: step 1/9. Catalyzes the condensation of ATP and 5-phosphoribose 1-diphosphate to form N'-(5'-phosphoribosyl)-ATP (PR-ATP). Has a crucial role in the pathway because the rate of histidine biosynthesis seems to be controlled primarily by regulation of HisG enzymatic activity. This Lacticaseibacillus casei (strain BL23) (Lactobacillus casei) protein is ATP phosphoribosyltransferase.